The primary structure comprises 518 residues: Glutamate--cysteine ligase (518 aa).

It belongs to the glutamate--cysteine ligase type 1 family. Type 1 subfamily.

The enzyme catalyses L-cysteine + L-glutamate + ATP = gamma-L-glutamyl-L-cysteine + ADP + phosphate + H(+). The protein operates within sulfur metabolism; glutathione biosynthesis; glutathione from L-cysteine and L-glutamate: step 1/2. The polypeptide is Glutamate--cysteine ligase (Klebsiella pneumoniae subsp. pneumoniae (strain ATCC 700721 / MGH 78578)).